Consider the following 173-residue polypeptide: Crossover junction endodeoxyribonuclease RuvC (173 aa).

Catalysis depends on residues Asp-8, Glu-67, and Asp-139. Asp-8, Glu-67, and Asp-139 together coordinate Mg(2+).

It belongs to the RuvC family. In terms of assembly, homodimer which binds Holliday junction (HJ) DNA. The HJ becomes 2-fold symmetrical on binding to RuvC with unstacked arms; it has a different conformation from HJ DNA in complex with RuvA. In the full resolvosome a probable DNA-RuvA(4)-RuvB(12)-RuvC(2) complex forms which resolves the HJ. Requires Mg(2+) as cofactor.

It is found in the cytoplasm. The catalysed reaction is Endonucleolytic cleavage at a junction such as a reciprocal single-stranded crossover between two homologous DNA duplexes (Holliday junction).. Functionally, the RuvA-RuvB-RuvC complex processes Holliday junction (HJ) DNA during genetic recombination and DNA repair. Endonuclease that resolves HJ intermediates. Cleaves cruciform DNA by making single-stranded nicks across the HJ at symmetrical positions within the homologous arms, yielding a 5'-phosphate and a 3'-hydroxyl group; requires a central core of homology in the junction. The consensus cleavage sequence is 5'-(A/T)TT(C/G)-3'. Cleavage occurs on the 3'-side of the TT dinucleotide at the point of strand exchange. HJ branch migration catalyzed by RuvA-RuvB allows RuvC to scan DNA until it finds its consensus sequence, where it cleaves and resolves the cruciform DNA. The polypeptide is Crossover junction endodeoxyribonuclease RuvC (Shewanella frigidimarina (strain NCIMB 400)).